We begin with the raw amino-acid sequence, 1778 residues long: Internalin I (1778 aa).

The first 28 residues, 1–28 (MKKKFSIVIISVLLLGYLAPFDTLLVGA), serve as a signal peptide directing secretion. A disordered region spans residues 36–101 (DTAVKTAEAD…NIKTEINTDK (66 aa)). The segment covering 51–62 (IESETGSDDETA) has biased composition (acidic residues). A compositionally biased stretch (basic and acidic residues) spans 63-88 (EEPKEAKEAEASKETTEKEEKAKTEE). LRR repeat units lie at residues 155–179 (AISQ…EGLQ), 183–204 (NLTS…KDLV), 205–227 (NLVS…EDLV), 228–250 (NLQE…ASLP), 251–272 (VLKE…NPAG), 277–298 (ELET…AKLP), 299–321 (KLKN…NGAT), 322–344 (KLQL…SGLS), 345–367 (ELEM…KNLP), 368–389 (NLVN…NNLP), 390–412 (KLQT…TDLP), 413–434 (QLKT…DNLP), 435–456 (KLEK…TDLP), 457–478 (RLSY…KKLP), 479–500 (LLEW…TNFP), 501–522 (SLNY…TELP), 523–544 (SLKE…HDMP), 545–566 (NLRK…DNLP), 567–588 (KLQS…HDLP), 589–610 (SLET…DNLP), 611–632 (DLTY…GDLP), 633–653 (NLET…GTMD), 657–678 (KLRI…GNLS), 685–707 (NLTE…STLS), 708–729 (RLIY…SNLT), 730–751 (NLQE…SDLE), and 752–773 (NLNK…ANMV). Residues 785-872 (TYTLPTVLSY…SAAKVTADAE (88 aa)) form the LRRCT domain. MucBP domains lie at 1510–1569 (DAAA…EQTV), 1575–1634 (AIKP…PQTI), and 1644–1705 (SKKS…SQTV). The disordered stretch occupies residues 1716–1742 (SKDDPKVKGKTNQPSSTDTKLKVDNNS). Polar residues predominate over residues 1725–1742 (KTNQPSSTDTKLKVDNNS). An LPXTG sorting signal motif is present at residues 1743 to 1747 (LPATG). A Pentaglycyl murein peptidoglycan amidated threonine modification is found at T1746. Positions 1747–1778 (GDTENMILAVLIGFNMLIVASIFLFRKPKTNQ) are cleaved as a propeptide — removed by sortase.

Belongs to the internalin family.

It localises to the secreted. The protein localises to the cell wall. Functionally, a role in virulence could not be demonstrated. This is Internalin I (inlI) from Listeria monocytogenes serovar 1/2a (strain ATCC BAA-679 / EGD-e).